We begin with the raw amino-acid sequence, 414 residues long: Dimethylsulfoniopropionate lyase DddY (414 aa).

The N-terminal stretch at Met-1 to Ala-18 is a signal peptide.

It belongs to the DMSP lyase DddY family.

It localises to the periplasm. The catalysed reaction is S,S-dimethyl-beta-propiothetin = acrylate + dimethyl sulfide + H(+). In terms of biological role, catalyzes the cleavage of dimethylsulfoniopropionate (DMSP) into dimethyl sulfide (DMS) and acrylate. The protein is Dimethylsulfoniopropionate lyase DddY of Shewanella woodyi (strain ATCC 51908 / MS32).